A 266-amino-acid chain; its full sequence is Glucosamine-6-phosphate deaminase (266 aa).

Asp72 functions as the Proton acceptor; for enolization step in the catalytic mechanism. Asp141 (for ring-opening step) is an active-site residue. His143 (proton acceptor; for ring-opening step) is an active-site residue. Glu148 serves as the catalytic For ring-opening step.

This sequence belongs to the glucosamine/galactosamine-6-phosphate isomerase family. NagB subfamily. As to quaternary structure, homohexamer.

The enzyme catalyses alpha-D-glucosamine 6-phosphate + H2O = beta-D-fructose 6-phosphate + NH4(+). The protein operates within amino-sugar metabolism; N-acetylneuraminate degradation; D-fructose 6-phosphate from N-acetylneuraminate: step 5/5. Its activity is regulated as follows. Allosterically activated by N-acetylglucosamine 6-phosphate (GlcNAc6P). Catalyzes the reversible isomerization-deamination of glucosamine 6-phosphate (GlcN6P) to form fructose 6-phosphate (Fru6P) and ammonium ion. The chain is Glucosamine-6-phosphate deaminase from Yersinia pestis bv. Antiqua (strain Antiqua).